The sequence spans 348 residues: Lipoyl synthase (348 aa).

[4Fe-4S] cluster-binding residues include Cys55, Cys60, Cys66, Cys81, Cys85, Cys88, and Ser292. Positions 67 to 281 (WESREATFLI…SDEAYEIGFA (215 aa)) constitute a Radical SAM core domain.

The protein belongs to the radical SAM superfamily. Lipoyl synthase family. Requires [4Fe-4S] cluster as cofactor.

The protein localises to the cytoplasm. The enzyme catalyses [[Fe-S] cluster scaffold protein carrying a second [4Fe-4S](2+) cluster] + N(6)-octanoyl-L-lysyl-[protein] + 2 oxidized [2Fe-2S]-[ferredoxin] + 2 S-adenosyl-L-methionine + 4 H(+) = [[Fe-S] cluster scaffold protein] + N(6)-[(R)-dihydrolipoyl]-L-lysyl-[protein] + 4 Fe(3+) + 2 hydrogen sulfide + 2 5'-deoxyadenosine + 2 L-methionine + 2 reduced [2Fe-2S]-[ferredoxin]. It functions in the pathway protein modification; protein lipoylation via endogenous pathway; protein N(6)-(lipoyl)lysine from octanoyl-[acyl-carrier-protein]: step 2/2. Catalyzes the radical-mediated insertion of two sulfur atoms into the C-6 and C-8 positions of the octanoyl moiety bound to the lipoyl domains of lipoate-dependent enzymes, thereby converting the octanoylated domains into lipoylated derivatives. The sequence is that of Lipoyl synthase from Corynebacterium efficiens (strain DSM 44549 / YS-314 / AJ 12310 / JCM 11189 / NBRC 100395).